The primary structure comprises 182 residues: Ferredoxin-thioredoxin reductase subunit A1, chloroplastic (182 aa).

The transit peptide at 1–81 (MSSQIALSPA…VAIKSADSIN (81 aa)) directs the protein to the chloroplast.

This sequence belongs to the ferredoxin thioredoxin reductase alpha subunit family. Heterodimer of subunit A (variable subunit) and subunit B (catalytic subunit). Heterodimeric FTR forms a complex with ferredoxin and thioredoxin.

It localises to the plastid. It is found in the chloroplast. Functionally, variable subunit of the ferredoxin-thioredoxin reductase (FTR), which catalyzes the two-electron reduction of thioredoxins by the electrons provided by reduced ferredoxin. The chain is Ferredoxin-thioredoxin reductase subunit A1, chloroplastic from Arabidopsis thaliana (Mouse-ear cress).